Here is a 141-residue protein sequence, read N- to C-terminus: uncharacterized protein (141 aa).

A run of 4 helical transmembrane segments spans residues 7–27 (VAIM…AASL), 47–67 (SAVG…MLGV), 75–95 (AVLC…ILMF), and 106–126 (VIFV…WFVA).

It is found in the cell membrane. This is an uncharacterized protein from Bacillus subtilis (strain 168).